Consider the following 197-residue polypeptide: MFLLLKKLYITFARSSRIIITLVIIDQLSKWWFIDDLRWKPGLMLKVTSFLNMVYTWNYGISFGLMREYYQYSNAIFLITNTLIVCYLYYLMIRSKTIGSFAGYSFVIGGAVGNLIDRFFRGAVFDFIHFHYQNYSFPVFNLADCFITIGVIILIEDYYSTKKVIEEKAKGNYDNAQIEAMAEKIRNAGHNGDDIVN.

2 helical membrane-spanning segments follow: residues 73–93 (SNAI…YLMI) and 97–117 (TIGS…NLID). Residues Asp-126 and Asp-144 contribute to the active site. Residues 135-155 (YSFPVFNLADCFITIGVIILI) traverse the membrane as a helical segment.

It belongs to the peptidase A8 family.

It is found in the cell inner membrane. The catalysed reaction is Release of signal peptides from bacterial membrane prolipoproteins. Hydrolyzes -Xaa-Yaa-Zaa-|-(S,diacylglyceryl)Cys-, in which Xaa is hydrophobic (preferably Leu), and Yaa (Ala or Ser) and Zaa (Gly or Ala) have small, neutral side chains.. The protein operates within protein modification; lipoprotein biosynthesis (signal peptide cleavage). This protein specifically catalyzes the removal of signal peptides from prolipoproteins. The polypeptide is Lipoprotein signal peptidase (Rickettsia felis (strain ATCC VR-1525 / URRWXCal2) (Rickettsia azadi)).